We begin with the raw amino-acid sequence, 127 residues long: Large ribosomal subunit protein eL8 (127 aa).

The protein belongs to the eukaryotic ribosomal protein eL8 family. Part of the 50S ribosomal subunit. Probably part of the RNase P complex.

The protein resides in the cytoplasm. Multifunctional RNA-binding protein that recognizes the K-turn motif in ribosomal RNA, the RNA component of RNase P, box H/ACA, box C/D and box C'/D' sRNAs. The polypeptide is Large ribosomal subunit protein eL8 (Hyperthermus butylicus (strain DSM 5456 / JCM 9403 / PLM1-5)).